The chain runs to 433 residues: MTDFSPREIVSELDRFIVGQADAKRAVAIALRNRWRRLQLEGSLREEVLPKNILMIGPTGVGKTEIARRLAKLAGAPFLKVEATKFTEVGYVGRDVEQIIRDLVEVAIAQVREKKRKDVQARAQVAAEERVLDALVGPGSGPATRDSFRKKLRAGELNDKEIEIETQAGSGSPMFEIPGMPGAQIGAVSLGDIFGKMGGRTKKRRLTVADSHEILVNEEADKLLDTDQLVQEAIAAVENNGIVFLDEIDKICVRDGRSGGEVSREGVQRDLLPLIEGTTVSTKHGAVKTEHILFIASGAFHIAKPSDLLPELQGRLPIRVELNALSRDDMRRILTEPEASLIKQYVALMKTEGVTLDFSDDAIDALADVAVAVNSTVENIGARRLQTVMERVLDEISFVAPDRHGETFRVDADYVKTNVGDLAKNTDLSRFIL.

Residues Val-18, Gly-60 to Glu-65, Asp-246, Glu-311, and Arg-383 each bind ATP.

The protein belongs to the ClpX chaperone family. HslU subfamily. As to quaternary structure, a double ring-shaped homohexamer of HslV is capped on each side by a ring-shaped HslU homohexamer. The assembly of the HslU/HslV complex is dependent on binding of ATP.

The protein localises to the cytoplasm. ATPase subunit of a proteasome-like degradation complex; this subunit has chaperone activity. The binding of ATP and its subsequent hydrolysis by HslU are essential for unfolding of protein substrates subsequently hydrolyzed by HslV. HslU recognizes the N-terminal part of its protein substrates and unfolds these before they are guided to HslV for hydrolysis. This Rhodopseudomonas palustris (strain ATCC BAA-98 / CGA009) protein is ATP-dependent protease ATPase subunit HslU.